The following is a 1498-amino-acid chain: Transposon Ty3-I Gag-Pol polyprotein (1498 aa).

Residues 265 to 282 (RLCFYCKKEGHRLNECRA) form a CCHC-type zinc finger. The For protease activity; shared with dimeric partner role is filled by Asp-336. The disordered stretch occupies residues 470 to 490 (TDPKSAGNRGNPRNTKLSLAP). In terms of domain architecture, Reverse transcriptase spans 646 to 823 (LDNKFIVPSK…EETEFLGYSI (178 aa)). The Mg(2+) site is built by Asp-712, Asp-774, and Asp-775. Positions 919–1037 (DASKDGIGAV…VADAISRAIY (119 aa)) constitute an RNase H Ty3/gyspy-type domain. Positions 1132 to 1171 (HTLFGGHFGVTVTLAKISPIYYWPKLQHSIIQYIRTCVQC) are integrase-type zinc finger-like. The Integrase catalytic domain occupies 1185 to 1350 (LQPLPIAEGR…SPFEIDLGYL (166 aa)). Mg(2+)-binding residues include Asp-1201 and Asp-1262.

As to quaternary structure, the protease is a homodimer, whose active site consists of two apposed aspartic acid residues. Initially, virus-like particles (VLPs) are composed of the structural unprocessed proteins Gag and Gag-Pol, and also contain the host initiator methionine tRNA (tRNA(i)-Met) which serves as a primer for minus-strand DNA synthesis, and a dimer of genomic Ty RNA. Processing of the polyproteins occurs within the particle and proceeds by an ordered pathway, called maturation. First, the protease (PR) is released by autocatalytic cleavage of the Gag-Pol polyprotein, and this cleavage is a prerequisite for subsequent processing at the remaining sites to release the mature structural and catalytic proteins. Maturation takes place prior to the RT reaction and is required to produce transposition-competent VLPs.

It localises to the cytoplasm. The protein localises to the nucleus. It catalyses the reaction DNA(n) + a 2'-deoxyribonucleoside 5'-triphosphate = DNA(n+1) + diphosphate. The enzyme catalyses Endonucleolytic cleavage to 5'-phosphomonoester.. In terms of biological role, capsid protein (CA) is the structural component of the virus-like particle (VLP), forming the shell that encapsulates the genomic RNA-nucleocapsid complex. Functionally, nucleocapsid protein p11 (NC) forms the nucleocore that coats the retro-elements dimeric RNA. Binds these RNAs through its zinc fingers. Promotes primer tRNA(i)-Met annealing to the multipartite primer-binding site (PBS), dimerization of Ty3 RNA and initiation of reverse transcription. Its function is as follows. The aspartyl protease (PR) mediates the proteolytic cleavages of the Gag and Gag-Pol polyproteins after assembly of the VLP. Reverse transcriptase/ribonuclease H (RT) is a multifunctional enzyme that catalyzes the conversion of the retro-elements RNA genome into dsDNA within the VLP. The enzyme displays a DNA polymerase activity that can copy either DNA or RNA templates, and a ribonuclease H (RNase H) activity that cleaves the RNA strand of RNA-DNA heteroduplexes during plus-strand synthesis and hydrolyzes RNA primers. The conversion leads to a linear dsDNA copy of the retrotransposon that includes long terminal repeats (LTRs) at both ends. In terms of biological role, integrase (IN) targets the VLP to the nucleus, where a subparticle preintegration complex (PIC) containing at least integrase and the newly synthesized dsDNA copy of the retrotransposon must transit the nuclear membrane. Once in the nucleus, integrase performs the integration of the dsDNA into the host genome. The sequence is that of Transposon Ty3-I Gag-Pol polyprotein (TY3B-I) from Saccharomyces cerevisiae (strain ATCC 204508 / S288c) (Baker's yeast).